A 525-amino-acid polypeptide reads, in one-letter code: ATP synthase subunit beta, mitochondrial (525 aa).

A mitochondrion-targeting transit peptide spans 1–44 (MLKKQALSGIRRFSLATKQSFVKTSYKLPRKSWLNTAKFNTIRY). 203 to 210 (GGAGVGKT) provides a ligand contact to ATP.

This sequence belongs to the ATPase alpha/beta chains family. In terms of assembly, F-type ATPases have 2 components, CF(1) - the catalytic core - and CF(0) - the membrane proton channel. CF(1) has five subunits: alpha(3), beta(3), gamma(1), delta(1), epsilon(1). CF(0) has three main subunits: a, b and c.

The protein resides in the mitochondrion. It localises to the mitochondrion inner membrane. It catalyses the reaction ATP + H2O + 4 H(+)(in) = ADP + phosphate + 5 H(+)(out). Its function is as follows. Mitochondrial membrane ATP synthase (F(1)F(0) ATP synthase or Complex V) produces ATP from ADP in the presence of a proton gradient across the membrane which is generated by electron transport complexes of the respiratory chain. F-type ATPases consist of two structural domains, F(1) - containing the extramembraneous catalytic core, and F(0) - containing the membrane proton channel, linked together by a central stalk and a peripheral stalk. During catalysis, ATP synthesis in the catalytic domain of F(1) is coupled via a rotary mechanism of the central stalk subunits to proton translocation. Subunits alpha and beta form the catalytic core in F(1). Rotation of the central stalk against the surrounding alpha(3)beta(3) subunits leads to hydrolysis of ATP in three separate catalytic sites on the beta subunits. The chain is ATP synthase subunit beta, mitochondrial (atp2) from Schizosaccharomyces pombe (strain 972 / ATCC 24843) (Fission yeast).